We begin with the raw amino-acid sequence, 320 residues long: 4-diphosphocytidyl-2-C-methyl-D-erythritol kinase (320 aa).

Lysine 20 is a catalytic residue. Residue 112–122 coordinates ATP; that stretch reads PVAGGMGGGSA. The active site involves aspartate 154.

Belongs to the GHMP kinase family. IspE subfamily.

It catalyses the reaction 4-CDP-2-C-methyl-D-erythritol + ATP = 4-CDP-2-C-methyl-D-erythritol 2-phosphate + ADP + H(+). It participates in isoprenoid biosynthesis; isopentenyl diphosphate biosynthesis via DXP pathway; isopentenyl diphosphate from 1-deoxy-D-xylulose 5-phosphate: step 3/6. Catalyzes the phosphorylation of the position 2 hydroxy group of 4-diphosphocytidyl-2C-methyl-D-erythritol. The protein is 4-diphosphocytidyl-2-C-methyl-D-erythritol kinase of Arthrobacter sp. (strain FB24).